Consider the following 173-residue polypeptide: Alpha-crystallin A chain (173 aa).

Residue Met-1 is modified to N-acetylmethionine. The segment at 1 to 63 is required for complex formation with BFSP1 and BFSP2; that stretch reads MDVTIQHPWF…RTVLDSGVSE (63 aa). Gln-6 bears the Deamidated glutamine; partial mark. A Phosphoserine modification is found at Ser-45. Gln-50 carries the deamidated glutamine; partial modification. The region spanning 52–162 is the sHSP domain; the sequence is LFRTVLDSGV…GHSERAIPVS (111 aa). Position 70 is an N6-acetyllysine (Lys-70). Gln-90 is subject to Deamidated glutamine; partial. Lys-99 is modified (N6-acetyllysine). Position 100 (His-100) interacts with Zn(2+). Deamidated asparagine; partial is present on Asn-101. Residues Glu-102 and His-107 each coordinate Zn(2+). Ser-122 carries the phosphoserine modification. Asn-123 carries the deamidated asparagine; partial modification. The interval 144 to 173 is disordered; the sequence is PKVQSGLDAGHSERAIPVSREEKPSSAPSS. Gln-147 is modified (deamidated glutamine; partial). Residues 153–167 show a composition bias toward basic and acidic residues; the sequence is GHSERAIPVSREEKP. A Zn(2+)-binding site is contributed by His-154. Ser-162 is a glycosylation site (O-linked (GlcNAc) serine).

Belongs to the small heat shock protein (HSP20) family. In terms of assembly, heteromer composed of three CRYAA and one CRYAB subunits. Inter-subunit bridging via zinc ions enhances stability, which is crucial as there is no protein turn over in the lens. Can also form homodimers and homotetramers (dimers of dimers) which serve as the building blocks of homooligomers. Within homooligomers, the zinc-binding motif is created from residues of 3 different molecules. His-100 and Glu-102 from one molecule are ligands of the zinc ion, and His-107 and His-154 residues from additional molecules complete the site with tetrahedral coordination geometry. Part of a complex required for lens intermediate filament formation composed of BFSP1, BFSP2 and CRYAA. In terms of processing, acetylation at Lys-70 may increase chaperone activity. Undergoes age-dependent proteolytical cleavage at the C-terminus.

It is found in the cytoplasm. The protein resides in the nucleus. Contributes to the transparency and refractive index of the lens. Acts as a chaperone, preventing aggregation of various proteins under a wide range of stress conditions. Required for the correct formation of lens intermediate filaments as part of a complex composed of BFSP1, BFSP2 and CRYAA. The chain is Alpha-crystallin A chain (CRYAA) from Otolemur crassicaudatus (Brown greater galago).